We begin with the raw amino-acid sequence, 355 residues long: Protein RecA (355 aa).

67-74 (GPESSGKT) contributes to the ATP binding site.

It belongs to the RecA family.

The protein resides in the cytoplasm. Functionally, can catalyze the hydrolysis of ATP in the presence of single-stranded DNA, the ATP-dependent uptake of single-stranded DNA by duplex DNA, and the ATP-dependent hybridization of homologous single-stranded DNAs. It interacts with LexA causing its activation and leading to its autocatalytic cleavage. The protein is Protein RecA of Histophilus somni (strain 2336) (Haemophilus somnus).